Reading from the N-terminus, the 335-residue chain is Fructokinase-2 (335 aa).

It belongs to the carbohydrate kinase PfkB family. As to expression, expressed in roots, at higher levels in stems, and hardly detectable in leaves.

It carries out the reaction D-fructose + ATP = D-fructose 6-phosphate + ADP + H(+). It participates in glycan biosynthesis; starch biosynthesis. Its activity is regulated as follows. Inhibited at high fructose. May play an important role in maintaining the flux of carbon towards starch formation. May also be involved in a sugar-sensing pathway. The sequence is that of Fructokinase-2 (FRK2) from Zea mays (Maize).